The following is a 194-amino-acid chain: Peptidyl-tRNA hydrolase (194 aa).

Tyrosine 16 provides a ligand contact to tRNA. Residue histidine 21 is the Proton acceptor of the active site. TRNA is bound by residues phenylalanine 67, asparagine 69, and asparagine 115.

Belongs to the PTH family. As to quaternary structure, monomer.

It localises to the cytoplasm. It carries out the reaction an N-acyl-L-alpha-aminoacyl-tRNA + H2O = an N-acyl-L-amino acid + a tRNA + H(+). In terms of biological role, hydrolyzes ribosome-free peptidyl-tRNAs (with 1 or more amino acids incorporated), which drop off the ribosome during protein synthesis, or as a result of ribosome stalling. Functionally, catalyzes the release of premature peptidyl moieties from peptidyl-tRNA molecules trapped in stalled 50S ribosomal subunits, and thus maintains levels of free tRNAs and 50S ribosomes. This chain is Peptidyl-tRNA hydrolase, found in Shigella flexneri.